The following is a 188-amino-acid chain: Elongation factor P (188 aa).

K34 is subject to N6-(3,6-diaminohexanoyl)-5-hydroxylysine.

Belongs to the elongation factor P family. Post-translationally, may be beta-lysylated on the epsilon-amino group of Lys-34 by the combined action of EpmA and EpmB, and then hydroxylated on the C5 position of the same residue by EpmC (if this protein is present). Lysylation is critical for the stimulatory effect of EF-P on peptide-bond formation. The lysylation moiety may extend toward the peptidyltransferase center and stabilize the terminal 3-CCA end of the tRNA. Hydroxylation of the C5 position on Lys-34 may allow additional potential stabilizing hydrogen-bond interactions with the P-tRNA.

It localises to the cytoplasm. It participates in protein biosynthesis; polypeptide chain elongation. Its function is as follows. Involved in peptide bond synthesis. Alleviates ribosome stalling that occurs when 3 or more consecutive Pro residues or the sequence PPG is present in a protein, possibly by augmenting the peptidyl transferase activity of the ribosome. Modification of Lys-34 is required for alleviation. The chain is Elongation factor P from Haemophilus influenzae (strain PittGG).